We begin with the raw amino-acid sequence, 107 residues long: Ferredoxin 1 (107 aa).

2 consecutive 4Fe-4S ferredoxin-type domains span residues 2-30 and 31-60; these read TFVV…YEGP and NFLV…SEDE. The [3Fe-4S] cluster site is built by Cys-9 and Cys-17. 4 residues coordinate [4Fe-4S] cluster: Cys-21, Cys-40, Cys-43, and Cys-46. Cys-50 is a [3Fe-4S] cluster binding site.

[4Fe-4S] cluster is required as a cofactor. Requires [3Fe-4S] cluster as cofactor.

Its function is as follows. Ferredoxins are iron-sulfur proteins that transfer electrons in a wide variety of metabolic reactions. The protein is Ferredoxin 1 (fdxA) of Pseudomonas putida (strain ATCC 47054 / DSM 6125 / CFBP 8728 / NCIMB 11950 / KT2440).